We begin with the raw amino-acid sequence, 838 residues long: Probable bifunctional folylpolyglutamate synthase/dihydropteroate synthase (838 aa).

Residues 1–418 form a folylpolyglutamate synthase region; the sequence is MEYHEAVNFL…LVVGSLYVVA (418 aa). 46–52 serves as a coordination point for ATP; it reads GSNGKGS. Positions 541–561 are disordered; that stretch reads AADAGEDDERGAGDASDAGHD. A Pterin-binding domain is found at 569–819; the sequence is TAVMGILNVT…DVPENVAAVN (251 aa). The segment at 571–838 is DHPS; that stretch reads VMGILNVTPN…RFEADAERED (268 aa). Asparagine 576 is a Mg(2+) binding site. (7,8-dihydropterin-6-yl)methyl diphosphate-binding positions include threonine 616, aspartate 649, asparagine 668, aspartate 738, lysine 774, and 807-809; that span reads RVH.

It in the N-terminal section; belongs to the folylpolyglutamate synthase family. This sequence in the C-terminal section; belongs to the DHPS family. It depends on Mg(2+) as a cofactor.

It catalyses the reaction (6S)-5,6,7,8-tetrahydrofolyl-(gamma-L-Glu)(n) + L-glutamate + ATP = (6S)-5,6,7,8-tetrahydrofolyl-(gamma-L-Glu)(n+1) + ADP + phosphate + H(+). It carries out the reaction (7,8-dihydropterin-6-yl)methyl diphosphate + 4-aminobenzoate = 7,8-dihydropteroate + diphosphate. Its pathway is cofactor biosynthesis; tetrahydrofolylpolyglutamate biosynthesis. It participates in cofactor biosynthesis; tetrahydrofolate biosynthesis; 7,8-dihydrofolate from 2-amino-4-hydroxy-6-hydroxymethyl-7,8-dihydropteridine diphosphate and 4-aminobenzoate: step 1/2. Can complement an H.volcanii mutant strain that is thymidine auxotroph because it lacks the two dihydrofolate reductase genes encoded by hdrA and hdrB. This is Probable bifunctional folylpolyglutamate synthase/dihydropteroate synthase (folCP) from Haloferax volcanii (strain ATCC 29605 / DSM 3757 / JCM 8879 / NBRC 14742 / NCIMB 2012 / VKM B-1768 / DS2) (Halobacterium volcanii).